The sequence spans 199 residues: V-type proton ATPase subunit E (199 aa).

The protein belongs to the V-ATPase E subunit family.

Functionally, produces ATP from ADP in the presence of a proton gradient across the membrane. In Clostridium botulinum (strain 657 / Type Ba4), this protein is V-type proton ATPase subunit E.